A 166-amino-acid polypeptide reads, in one-letter code: Interferon gamma (166 aa).

The first 23 residues, 1–23, serve as a signal peptide directing secretion; it reads MKYTSYFLALQLCLLLGFSGSYG. Pyrrolidone carboxylic acid is present on glutamine 24. N-linked (GlcNAc...) asparagine glycans are attached at residues asparagine 39 and asparagine 106.

This sequence belongs to the type II (or gamma) interferon family. Homodimer. Interacts with IFNGR1 (via extracellular domain); this interaction promotes IFNGR1 dimerization. As to expression, released primarily from activated T lymphocytes.

The protein resides in the secreted. In terms of biological role, type II interferon produced by immune cells such as T-cells and NK cells that plays crucial roles in antimicrobial, antiviral, and antitumor responses by activating effector immune cells and enhancing antigen presentation. Primarily signals through the JAK-STAT pathway after interaction with its receptor IFNGR1 to affect gene regulation. Upon IFNG binding, IFNGR1 intracellular domain opens out to allow association of downstream signaling components JAK2, JAK1 and STAT1, leading to STAT1 activation, nuclear translocation and transcription of IFNG-regulated genes. Many of the induced genes are transcription factors such as IRF1 that are able to further drive regulation of a next wave of transcription. Plays a role in class I antigen presentation pathway by inducing a replacement of catalytic proteasome subunits with immunoproteasome subunits. In turn, increases the quantity, quality, and repertoire of peptides for class I MHC loading. Increases the efficiency of peptide generation also by inducing the expression of activator PA28 that associates with the proteasome and alters its proteolytic cleavage preference. Up-regulates as well MHC II complexes on the cell surface by promoting expression of several key molecules such as cathepsins B/CTSB, H/CTSH, and L/CTSL. Participates in the regulation of hematopoietic stem cells during development and under homeostatic conditions by affecting their development, quiescence, and differentiation. The chain is Interferon gamma (IFNG) from Moschus berezovskii (Chinese forest musk deer).